The following is a 284-amino-acid chain: Tropomyosin (284 aa).

The tract at residues 1–38 is disordered; sequence MEAIKKKMQAMKLEKDNAVDRAETAEQQSREAALRAEK. A coiled-coil region spans residues 1–284; the sequence is MEAIKKKMQA…DQTFSELTGY (284 aa). The segment covering 12–38 has biased composition (basic and acidic residues); it reads KLEKDNAVDRAETAEQQSREAALRAEK.

The protein belongs to the tropomyosin family. In terms of assembly, homodimer.

Its function is as follows. Tropomyosin, in association with the troponin complex, plays a central role in the calcium dependent regulation of muscle contraction. This Rhipicephalus microplus (Cattle tick) protein is Tropomyosin.